A 254-amino-acid polypeptide reads, in one-letter code: Phosphoglycerate mutase 1 (254 aa).

Residues 10–17 and 23–24 each bind substrate; these read RHGESAWN and SG. The active-site Tele-phosphohistidine intermediate is His-11. Residues Ser-14 and Ser-23 each carry the phosphoserine modification. At Tyr-26 the chain carries Phosphotyrosine. Position 31 is a phosphoserine (Ser-31). Residues Arg-62, 89 to 92, and Lys-100 contribute to the substrate site; that span reads ERHY. Glu-89 acts as the Proton donor/acceptor in catalysis. An N6-acetyllysine modification is found at Lys-106. 116-117 lines the substrate pocket; sequence RR. Ser-118 carries the phosphoserine modification. Position 187 to 188 (187 to 188) interacts with substrate; sequence GN. Position 251 is an N6-acetyllysine; alternate (Lys-251). Lys-251 carries the post-translational modification N6-succinyllysine; alternate. An N6-acetyllysine mark is found at Lys-253 and Lys-254.

Belongs to the phosphoglycerate mutase family. BPG-dependent PGAM subfamily. As to quaternary structure, homodimer. Acetylated at Lys-253, Lys-253 and Lys-254 under high glucose condition. Acetylation increases catalytic activity. Under glucose restriction SIRT1 levels dramatically increase and it deacetylates the enzyme. As to expression, expressed in the liver and brain. Not found in the muscle.

The catalysed reaction is (2R)-2-phosphoglycerate = (2R)-3-phosphoglycerate. It carries out the reaction (2R)-3-phospho-glyceroyl phosphate = (2R)-2,3-bisphosphoglycerate + H(+). Catalyzes the interconversion of 2-phosphoglycerate and 3-phosphoglyceratea crucial step in glycolysis, by using 2,3-bisphosphoglycerate. Also catalyzes the interconversion of (2R)-2,3-bisphosphoglycerate and (2R)-3-phospho-glyceroyl phosphate. The chain is Phosphoglycerate mutase 1 from Homo sapiens (Human).